A 172-amino-acid chain; its full sequence is Transcriptional repressor NrdR (172 aa).

Residues 3 to 34 (CPYCRNTDTRVLDSRVADDGGSIRRRRTCSAC) fold into a zinc finger. Residues 46-136 (LTVLKRSGAS…VYRAFESADD (91 aa)) enclose the ATP-cone domain.

The protein belongs to the NrdR family. The cofactor is Zn(2+).

Negatively regulates transcription of bacterial ribonucleotide reductase nrd genes and operons by binding to NrdR-boxes. The sequence is that of Transcriptional repressor NrdR from Nocardioides sp. (strain ATCC BAA-499 / JS614).